Consider the following 91-residue polypeptide: MQITDVRIRKISSEGKMKAIVSVTFDNEFVVHDIKVIEGQNGLFIAMPSRKTPTGEFKDIAHPIVMDSREKIQNEILSAYAKAIEEQDVEE.

It belongs to the SpoVG family.

Its function is as follows. Could be involved in septation. This chain is Putative septation protein SpoVG, found in Clostridium botulinum (strain Alaska E43 / Type E3).